Reading from the N-terminus, the 135-residue chain is ATP synthase epsilon chain (135 aa).

Belongs to the ATPase epsilon chain family. In terms of assembly, F-type ATPases have 2 components, CF(1) - the catalytic core - and CF(0) - the membrane proton channel. CF(1) has five subunits: alpha(3), beta(3), gamma(1), delta(1), epsilon(1). CF(0) has three main subunits: a, b and c.

The protein localises to the cell inner membrane. Its function is as follows. Produces ATP from ADP in the presence of a proton gradient across the membrane. This is ATP synthase epsilon chain from Desulforapulum autotrophicum (strain ATCC 43914 / DSM 3382 / VKM B-1955 / HRM2) (Desulfobacterium autotrophicum).